We begin with the raw amino-acid sequence, 469 residues long: 3-isopropylmalate dehydratase large subunit (469 aa).

[4Fe-4S] cluster is bound by residues C349, C410, and C413.

This sequence belongs to the aconitase/IPM isomerase family. LeuC type 1 subfamily. In terms of assembly, heterodimer of LeuC and LeuD. [4Fe-4S] cluster serves as cofactor.

It catalyses the reaction (2R,3S)-3-isopropylmalate = (2S)-2-isopropylmalate. It participates in amino-acid biosynthesis; L-leucine biosynthesis; L-leucine from 3-methyl-2-oxobutanoate: step 2/4. Functionally, catalyzes the isomerization between 2-isopropylmalate and 3-isopropylmalate, via the formation of 2-isopropylmaleate. The polypeptide is 3-isopropylmalate dehydratase large subunit (Neisseria meningitidis serogroup C (strain 053442)).